Reading from the N-terminus, the 364-residue chain is Probable dual-specificity RNA methyltransferase RlmN (364 aa).

Glutamate 106 functions as the Proton acceptor in the catalytic mechanism. The region spanning 112-350 is the Radical SAM core domain; sequence YPQRNTVCIS…SCTVRDTRGR (239 aa). Cysteines 119 and 356 form a disulfide. The [4Fe-4S] cluster site is built by cysteine 126, cysteine 130, and cysteine 133. S-adenosyl-L-methionine is bound by residues 177-178, serine 211, 234-236, and asparagine 313; these read GE and SLH. Cysteine 356 (S-methylcysteine intermediate) is an active-site residue.

Belongs to the radical SAM superfamily. RlmN family. [4Fe-4S] cluster is required as a cofactor.

The protein localises to the cytoplasm. It carries out the reaction adenosine(2503) in 23S rRNA + 2 reduced [2Fe-2S]-[ferredoxin] + 2 S-adenosyl-L-methionine = 2-methyladenosine(2503) in 23S rRNA + 5'-deoxyadenosine + L-methionine + 2 oxidized [2Fe-2S]-[ferredoxin] + S-adenosyl-L-homocysteine. The enzyme catalyses adenosine(37) in tRNA + 2 reduced [2Fe-2S]-[ferredoxin] + 2 S-adenosyl-L-methionine = 2-methyladenosine(37) in tRNA + 5'-deoxyadenosine + L-methionine + 2 oxidized [2Fe-2S]-[ferredoxin] + S-adenosyl-L-homocysteine. In terms of biological role, specifically methylates position 2 of adenine 2503 in 23S rRNA and position 2 of adenine 37 in tRNAs. The protein is Probable dual-specificity RNA methyltransferase RlmN of Mycobacterium marinum (strain ATCC BAA-535 / M).